The sequence spans 450 residues: Phosphoglucosamine mutase (450 aa).

The active-site Phosphoserine intermediate is S101. The Mg(2+) site is built by S101, D240, D242, and D244. S101 carries the phosphoserine modification.

Belongs to the phosphohexose mutase family. It depends on Mg(2+) as a cofactor. In terms of processing, activated by phosphorylation.

The enzyme catalyses alpha-D-glucosamine 1-phosphate = D-glucosamine 6-phosphate. In terms of biological role, catalyzes the conversion of glucosamine-6-phosphate to glucosamine-1-phosphate. This is Phosphoglucosamine mutase from Streptococcus equi subsp. equi (strain 4047).